The sequence spans 452 residues: AP-4 complex subunit mu-1 (452 aa).

Residues 184–451 (KNEVFLDVVE…LSHSDAYVIR (268 aa)) form the MHD domain.

It belongs to the adaptor complexes medium subunit family. In terms of assembly, adaptor protein complex 4 (AP-4) is a heterotetramer composed of two large adaptins (epsilon-type subunit AP4E1 and beta-type subunit AP4B1), a medium adaptin (mu-type subunit AP4M1) and a small adaptin (sigma-type AP4S1). Interacts with tyrosine-based sorting signals on the cytoplasmic tail of cargo proteins such as APP, ATG9A, LAMP2 and NAGPA. Interacts with the C-terminal domain of GRID2. Interacts with GRIA1 and GRIA2; the interaction is indirect via CACNG3. Interacts with CACNG3; CACNG3 associates GRIA1 and GRIA2 with the adaptor protein complex 4 (AP-4) to target them to the somatodendritic compartment of neurons. Interacts with HOOK1 and HOOK2; the interactions are direct, mediate the interaction between FTS-Hook-FHIP (FHF) complex and AP-4 and the perinuclear distribution of AP-4.

It localises to the golgi apparatus. The protein localises to the trans-Golgi network membrane. The protein resides in the early endosome. Component of the adaptor protein complex 4 (AP-4). Adaptor protein complexes are vesicle coat components involved both in vesicle formation and cargo selection. They control the vesicular transport of proteins in different trafficking pathways. AP-4 forms a non clathrin-associated coat on vesicles departing the trans-Golgi network (TGN) and may be involved in the targeting of proteins from the trans-Golgi network (TGN) to the endosomal-lysosomal system. It is also involved in protein sorting to the basolateral membrane in epithelial cells and the proper asymmetric localization of somatodendritic proteins in neurons. Within AP-4, the mu-type subunit AP4M1 is directly involved in the recognition and binding of tyrosine-based sorting signals found in the cytoplasmic part of cargos. The adaptor protein complex 4 (AP-4) may also recognize other types of sorting signal. This chain is AP-4 complex subunit mu-1, found in Canis lupus familiaris (Dog).